The chain runs to 244 residues: Mediator of RNA polymerase II transcription subunit 19 (244 aa).

2 disordered regions span residues 1–56 (MENF…PGAD) and 171–244 (PKKK…SSLR). Residues 26–47 (GKPPPPPPPPAGGGPGTAPPPT) show a composition bias toward pro residues. Over residues 171-182 (PKKKNKHKHKQS) the composition is skewed to basic residues. Ser-194 is modified (phosphoserine). Over residues 212–224 (KRKKKEKKKKKNR) the composition is skewed to basic residues. Position 226 is a phosphoserine (Ser-226). Residues 234 to 244 (SSQASSSSSLR) show a composition bias toward low complexity.

Belongs to the Mediator complex subunit 19 family. Component of the Mediator complex, which is composed of MED1, MED4, MED6, MED7, MED8, MED9, MED10, MED11, MED12, MED13, MED13L, MED14, MED15, MED16, MED17, MED18, MED19, MED20, MED21, MED22, MED23, MED24, MED25, MED26, MED27, MED29, MED30, MED31, CCNC, CDK8 and CDC2L6/CDK11. The MED12, MED13, CCNC and CDK8 subunits form a distinct module termed the CDK8 module. Mediator containing the CDK8 module is less active than Mediator lacking this module in supporting transcriptional activation. Individual preparations of the Mediator complex lacking one or more distinct subunits have been variously termed ARC, CRSP, DRIP, PC2, SMCC and TRAP.

The protein resides in the nucleus. Its function is as follows. Component of the Mediator complex, a coactivator involved in the regulated transcription of nearly all RNA polymerase II-dependent genes. Mediator functions as a bridge to convey information from gene-specific regulatory proteins to the basal RNA polymerase II transcription machinery. Mediator is recruited to promoters by direct interactions with regulatory proteins and serves as a scaffold for the assembly of a functional preinitiation complex with RNA polymerase II and the general transcription factors. This Homo sapiens (Human) protein is Mediator of RNA polymerase II transcription subunit 19 (MED19).